We begin with the raw amino-acid sequence, 337 residues long: tRNA N6-adenosine threonylcarbamoyltransferase (337 aa).

The Fe cation site is built by histidine 111 and histidine 115. Residues 134–138 (LVSGG), aspartate 167, glycine 180, and asparagine 272 contribute to the substrate site. Fe cation is bound at residue aspartate 300.

The protein belongs to the KAE1 / TsaD family. Requires Fe(2+) as cofactor.

It localises to the cytoplasm. The enzyme catalyses L-threonylcarbamoyladenylate + adenosine(37) in tRNA = N(6)-L-threonylcarbamoyladenosine(37) in tRNA + AMP + H(+). Required for the formation of a threonylcarbamoyl group on adenosine at position 37 (t(6)A37) in tRNAs that read codons beginning with adenine. Is involved in the transfer of the threonylcarbamoyl moiety of threonylcarbamoyl-AMP (TC-AMP) to the N6 group of A37, together with TsaE and TsaB. TsaD likely plays a direct catalytic role in this reaction. This is tRNA N6-adenosine threonylcarbamoyltransferase from Aeromonas salmonicida (strain A449).